The primary structure comprises 46 residues: Photosystem II reaction center protein K (46 aa).

Residues 1 to 9 constitute a propeptide that is removed on maturation; that stretch reads MSTLPILLA. Residues 25–45 form a helical membrane-spanning segment; that stretch reads LPSIPVLFLLLAFVWQAAVSF.

Belongs to the PsbK family. PSII is composed of 1 copy each of membrane proteins PsbA, PsbB, PsbC, PsbD, PsbE, PsbF, PsbH, PsbI, PsbJ, PsbK, PsbL, PsbM, PsbT, PsbX, PsbY, PsbZ, Psb30/Ycf12, at least 3 peripheral proteins of the oxygen-evolving complex and a large number of cofactors. It forms dimeric complexes.

Its subcellular location is the plastid. It localises to the chloroplast thylakoid membrane. In terms of biological role, one of the components of the core complex of photosystem II (PSII). PSII is a light-driven water:plastoquinone oxidoreductase that uses light energy to abstract electrons from H(2)O, generating O(2) and a proton gradient subsequently used for ATP formation. It consists of a core antenna complex that captures photons, and an electron transfer chain that converts photonic excitation into a charge separation. The sequence is that of Photosystem II reaction center protein K from Nephroselmis olivacea (Green alga).